Reading from the N-terminus, the 134-residue chain is Small ribosomal subunit protein uS8c (134 aa).

The protein belongs to the universal ribosomal protein uS8 family. As to quaternary structure, part of the 30S ribosomal subunit.

It localises to the plastid. In terms of biological role, one of the primary rRNA binding proteins, it binds directly to 16S rRNA central domain where it helps coordinate assembly of the platform of the 30S subunit. This is Small ribosomal subunit protein uS8c (rps8) from Cuscuta obtusiflora (Peruvian dodder).